An 813-amino-acid chain; its full sequence is Putative ATPase, plasma membrane-like (813 aa).

Residues 1–66 are Cytoplasmic-facing; the sequence is MATGDSLEDI…KKKEHITLRF (66 aa). Residues 67–86 form a helical membrane-spanning segment; that stretch reads FALMFKPLSWVIQAAAIMAM. Topologically, residues 87 to 94 are extracellular; sequence LFANGDGR. Residues 95-115 form a helical membrane-spanning segment; sequence QLFLGIVCLLIVNTIICYLKE. The Cytoplasmic segment spans residues 116–245; the sequence is DDAANVVAMA…GHFRKVVTEI (130 aa). A helical transmembrane segment spans residues 246 to 266; the sequence is ENLCVISIAIGISIEVIVMYW. Residues 267–275 are Extracellular-facing; sequence IQRRNFSDV. The chain crosses the membrane as a helical span at residues 276-293; the sequence is INNLLVLVIGGIPLAMPT. Residues 294-555 lie on the Cytoplasmic side of the membrane; that stretch reads VLYVIMVTGS…ASRAILQQMK (262 aa). Residue D331 is the 4-aspartylphosphate intermediate of the active site. Residues D500 and D504 each coordinate Mg(2+). Residues 556-577 form a helical membrane-spanning segment; the sequence is HYTIYAVSITIRVVFGFMFIAL. The Extracellular segment spans residues 578–582; it reads IWKFD. The chain crosses the membrane as a helical span at residues 583-605; the sequence is FSPFMVLAIALLNEETTKAITMD. The Cytoplasmic portion of the chain corresponds to 606–622; that stretch reads NVTNPSPTPDSLKLKEI. Residues 623–643 traverse the membrane as a helical segment; it reads FATGVVYGSYMALITVVFFWA. Topologically, residues 644 to 664 are extracellular; it reads AYRTDIFPRTFHVRDLRGNEA. The chain crosses the membrane as a helical span at residues 665-685; the sequence is EMMCALYLQVSIMSQALFFVI. The Cytoplasmic portion of the chain corresponds to 686–697; it reads QSRSWFFVERPG. A helical transmembrane segment spans residues 698-718; the sequence is ELLFLSFVTVQTIATTLAVYA. Residues 719–726 lie on the Extracellular side of the membrane; it reads SWETARIE. The helical transmembrane segment at 727 to 747 threads the bilayer; that stretch reads GIGWSWAGVIWLYNIIFFFPL. Residues 748–813 are Cytoplasmic-facing; that stretch reads DIMKFGIRYI…SQDLRGVGWV (66 aa). S776 is subject to Phosphoserine.

The protein belongs to the cation transport ATPase (P-type) (TC 3.A.3) family. Type IIIA subfamily.

Its subcellular location is the membrane. This is Putative ATPase, plasma membrane-like from Arabidopsis thaliana (Mouse-ear cress).